Here is a 325-residue protein sequence, read N- to C-terminus: Beta-lactamase 1 (325 aa).

The N-terminal stretch at methionine 1–glycine 26 is a signal peptide. Residues glycine 30 to alanine 50 are disordered. Catalysis depends on serine 93, which acts as the Acyl-ester intermediate. Lysine 270 to glycine 272 contacts substrate.

The protein belongs to the class-A beta-lactamase family.

The catalysed reaction is a beta-lactam + H2O = a substituted beta-amino acid. In Streptomyces cacaoi, this protein is Beta-lactamase 1 (blaL).